The primary structure comprises 372 residues: Putative glutamate--cysteine ligase 2 (372 aa).

This sequence belongs to the glutamate--cysteine ligase type 2 family. YbdK subfamily. Homodimer.

It catalyses the reaction L-cysteine + L-glutamate + ATP = gamma-L-glutamyl-L-cysteine + ADP + phosphate + H(+). Functionally, ATP-dependent carboxylate-amine ligase which exhibits weak glutamate--cysteine ligase activity. This is Putative glutamate--cysteine ligase 2 (ybdK) from Escherichia coli (strain K12 / MC4100 / BW2952).